Consider the following 416-residue polypeptide: Tiggy-winkle hedgehog protein (416 aa).

Positions 1–26 (MDVRLHLKQFALLCFISLLLTPCGLA) are cleaved as a signal peptide. C27 is lipidated: N-palmitoyl cysteine. 7 residues coordinate Ca(2+): E92, E93, D98, T128, E129, D132, and D134. 3 residues coordinate Zn(2+): H143, D150, and H185. G200 carries the Cholesterol glycine ester lipid modification.

This sequence belongs to the hedgehog family. In terms of assembly, multimer. Interacts with HHATL/GUP1 which negatively regulates HHAT-mediated palmitoylation of the TWHH N-terminus. Interacts with BOC and CDON. Interacts with HHIP. Interacts with DISP1 via its cholesterol anchor. Interacts with SCUBE2. Post-translationally, the C-terminal domain displays an autoproteolysis activity and a cholesterol transferase activity. Both activities result in the cleavage of the full-length protein into two parts (N-product and C-product) followed by the covalent attachment of a cholesterol moiety to the C-terminal of the newly generated N-product. Cholesterylation is required for the tiggy-winkle hedgehog protein N-product targeting to lipid rafts and multimerization. N-product is the active species in both local and long-range signaling, whereas the C-product is degraded in the endoplasmic reticulum. N-palmitoylation by HHAT of N-product is required for tiggy-winkle hedgehog protein N-product multimerization and full activity. It is a prerequisite for the membrane-proximal positioning and the subsequent shedding of this N-terminal peptide. In terms of processing, the lipidated N- and C-terminal peptides of N-product can be cleaved (shedding). The N-terminal palmitoylated peptide is cleaved at the Cardin-Weintraub (CW) motif site. The cleavage reduced the interactions with heparan sulfate. The cleavage is enhanced by SCUBE2. In terms of tissue distribution, expressed in the ventral midline of the neural tube and brain. In the developing brain, expression occurs in domains that include a discrete region in the floor of the diencephalon. Not detected in the notochord or developing fin bud.

It is found in the cell membrane. It localises to the endoplasmic reticulum membrane. The protein resides in the golgi apparatus membrane. Its function is as follows. The C-terminal part of the tiggy-winkle hedgehog protein precursor displays an autoproteolysis and a cholesterol transferase activity. Both activities result in the cleavage of the full-length protein into two parts (N-product and C-product) followed by the covalent attachment of a cholesterol moiety to the C-terminal of the newly generated N-product. Both activities occur in the endoplasmic reticulum. Once cleaved, the C-product is degraded in the endoplasmic reticulum. The dually lipidated tiggy-winkle hedgehog protein N-product is a morphogen which is essential for a variety of patterning events during development. Involved in dorso-ventral patterning of the brain and in early patterning of the developing eyes. Binds to the patched (PTCH1) receptor, which functions in association with smoothened (SMO), to activate the transcription of target genes. This Danio rerio (Zebrafish) protein is Tiggy-winkle hedgehog protein (shhb).